Consider the following 395-residue polypeptide: Probable sugar efflux transporter (395 aa).

The next 12 membrane-spanning stretches (helical) occupy residues 13–33 (VVSL…PVAL), 48–68 (VGLI…PCML), 82–102 (IFIL…YWVL), 107–127 (IGVA…VVRL), 134–154 (AQAL…GLPL), 168–188 (FVLI…LLPV), 207–227 (PALL…FTAY), 244–264 (FTTI…MLFS), 272–292 (AGFL…LLPL), 297–317 (WSLS…SLGM), 331–351 (VAMA…ALLG), and 363–383 (IGYM…FTFV).

Belongs to the major facilitator superfamily. SotB (TC 2.A.1.2) family.

The protein localises to the cell inner membrane. Functionally, involved in the efflux of sugars. The physiological role may be the reduction of the intracellular concentration of toxic sugars or sugar metabolites. This Pectobacterium atrosepticum (strain SCRI 1043 / ATCC BAA-672) (Erwinia carotovora subsp. atroseptica) protein is Probable sugar efflux transporter.